The primary structure comprises 314 residues: Probable cell division protein WhiA (314 aa).

Residues 274–308 (SLKELGEMVSTGPISKSGVNHRLRKLNDLADKIRN) constitute a DNA-binding region (H-T-H motif).

This sequence belongs to the WhiA family.

Its function is as follows. Involved in cell division and chromosome segregation. This chain is Probable cell division protein WhiA, found in Staphylococcus aureus (strain Mu3 / ATCC 700698).